A 201-amino-acid polypeptide reads, in one-letter code: Recombination protein RecR (201 aa).

A C4-type zinc finger spans residues 60–75 (CQICGNIDTRDPCTIC). The Toprim domain maps to 83-178 (TLLVVVETVA…KITRLAHGVP (96 aa)).

This sequence belongs to the RecR family.

May play a role in DNA repair. It seems to be involved in an RecBC-independent recombinational process of DNA repair. It may act with RecF and RecO. In Beijerinckia indica subsp. indica (strain ATCC 9039 / DSM 1715 / NCIMB 8712), this protein is Recombination protein RecR.